The sequence spans 747 residues: DNA ligase (747 aa).

NAD(+) is bound by residues 33–37 (DEEYD), 83–84 (SL), and Glu113. Lys115 (N6-AMP-lysine intermediate) is an active-site residue. 4 residues coordinate NAD(+): Arg136, Glu174, Lys299, and Lys323. Residues Cys417, Cys420, Cys436, and Cys442 each contribute to the Zn(2+) site. A BRCT domain is found at 659 to 747 (TGGGVLSGLT…GPGALPEVAE (89 aa)).

This sequence belongs to the NAD-dependent DNA ligase family. LigA subfamily. Requires Mg(2+) as cofactor. The cofactor is Mn(2+).

The enzyme catalyses NAD(+) + (deoxyribonucleotide)n-3'-hydroxyl + 5'-phospho-(deoxyribonucleotide)m = (deoxyribonucleotide)n+m + AMP + beta-nicotinamide D-nucleotide.. Functionally, DNA ligase that catalyzes the formation of phosphodiester linkages between 5'-phosphoryl and 3'-hydroxyl groups in double-stranded DNA using NAD as a coenzyme and as the energy source for the reaction. It is essential for DNA replication and repair of damaged DNA. The chain is DNA ligase from Leifsonia xyli subsp. xyli (strain CTCB07).